The primary structure comprises 216 residues: MSKVSVASVRSNVEQILKGSEEKKRNFTETVELQIGLKNYDPQRDKRFSGTIKLPNVPRPNMAICILGDAHDLDRAKHGGVDAMSVDDLKKLNKNKKLVKKLAKKYDAFIASEVLIKQIPRLLGPGLSKAGKFPSPVSHADDLYGKITEVKSTIKFQLKKVLCLGVAVGHVEMSEEQLIANIMLAVNFLVSLLKKGWQNIGSLVVKSTMGKPHRLY.

At Ser11 the chain carries Phosphoserine.

The protein belongs to the universal ribosomal protein uL1 family. In terms of assembly, component of the large ribosomal subunit (LSU). Mature yeast ribosomes consist of a small (40S) and a large (60S) subunit. The 40S small subunit contains 1 molecule of ribosomal RNA (18S rRNA) and at least 33 different proteins. The large 60S subunit contains 3 rRNA molecules (25S, 5.8S and 5S rRNA) and at least 46 different proteins. uL1 forms part of the L1 stalk.

The protein localises to the cytoplasm. Its function is as follows. Component of the ribosome, a large ribonucleoprotein complex responsible for the synthesis of proteins in the cell. The small ribosomal subunit (SSU) binds messenger RNAs (mRNAs) and translates the encoded message by selecting cognate aminoacyl-transfer RNA (tRNA) molecules. The large subunit (LSU) contains the ribosomal catalytic site termed the peptidyl transferase center (PTC), which catalyzes the formation of peptide bonds, thereby polymerizing the amino acids delivered by tRNAs into a polypeptide chain. The nascent polypeptides leave the ribosome through a tunnel in the LSU and interact with protein factors that function in enzymatic processing, targeting, and the membrane insertion of nascent chains at the exit of the ribosomal tunnel. uL1 forms part of the L1 stalk, a mobile element that plays a role in evacuating the exit-site tRNA. This Schizosaccharomyces pombe (strain 972 / ATCC 24843) (Fission yeast) protein is Large ribosomal subunit protein uL1B (rpl101).